The chain runs to 467 residues: tRNA-2-methylthio-N(6)-dimethylallyladenosine synthase (467 aa).

The MTTase N-terminal domain maps to 15–135 (KKIFVKTYGC…LPEYVARLAN (121 aa)). [4Fe-4S] cluster contacts are provided by Cys24, Cys60, Cys98, Cys177, Cys181, and Cys184. In terms of domain architecture, Radical SAM core spans 163–395 (LARGATAFLT…QALLGEQQLA (233 aa)). Positions 398 to 461 (AGCAGRTMPV…RNSLRGRLRE (64 aa)) constitute a TRAM domain.

Belongs to the methylthiotransferase family. MiaB subfamily. In terms of assembly, monomer. Requires [4Fe-4S] cluster as cofactor.

It is found in the cytoplasm. The enzyme catalyses N(6)-dimethylallyladenosine(37) in tRNA + (sulfur carrier)-SH + AH2 + 2 S-adenosyl-L-methionine = 2-methylsulfanyl-N(6)-dimethylallyladenosine(37) in tRNA + (sulfur carrier)-H + 5'-deoxyadenosine + L-methionine + A + S-adenosyl-L-homocysteine + 2 H(+). In terms of biological role, catalyzes the methylthiolation of N6-(dimethylallyl)adenosine (i(6)A), leading to the formation of 2-methylthio-N6-(dimethylallyl)adenosine (ms(2)i(6)A) at position 37 in tRNAs that read codons beginning with uridine. The polypeptide is tRNA-2-methylthio-N(6)-dimethylallyladenosine synthase (Parvibaculum lavamentivorans (strain DS-1 / DSM 13023 / NCIMB 13966)).